Reading from the N-terminus, the 329-residue chain is MAQLPPKIPTMTTPNWPDFSSQKLPSIAATAAAAATAGPQQQNPSWMDEFLDFSATRRGTHRRSISDSIAFLEPPSSGVGNHHFDRFDDEQFMSMFNDDVHNNNHNHHHHHSINGNVGPTRSSSNTSTPSDHNSLSDDDNNKEAPPSDHDHHMDNNVANQNNAAGNNYNESDEVQSQCKTEPQDGPSANQNSGGSSGNRIHDPKRVKRILANRQSAQRSRVRKLQYISELERSVTSLQTEVSVLSPRVAFLDHQRLLLNVDNSAIKQRIAALAQDKIFKDAHQEALKREIERLRQVYHQQSLKKMENNVSDQSPADIKPSVEKEQLLNV.

Disordered regions lie at residues 1-22 and 98-204; these read MAQL…FSSQ and DDVH…HDPK. The segment covering 10 to 22 has biased composition (polar residues); that stretch reads TMTTPNWPDFSSQ. The span at 119 to 133 shows a compositional bias: low complexity; that stretch reads PTRSSSNTSTPSDHN. A compositionally biased stretch (basic and acidic residues) spans 139 to 154; sequence DNNKEAPPSDHDHHMD. The segment covering 155–169 has biased composition (low complexity); that stretch reads NNVANQNNAAGNNYN. A bZIP domain is found at 202 to 254; it reads DPKRVKRILANRQSAQRSRVRKLQYISELERSVTSLQTEVSVLSPRVAFLDHQ. Residues 204–223 form a basic motif region; that stretch reads KRVKRILANRQSAQRSRVRK. Residues 230–251 form a leucine-zipper region; sequence LERSVTSLQTEVSVLSPRVAFL. A compositionally biased stretch (polar residues) spans 304 to 313; sequence KMENNVSDQS. Residues 304–329 are disordered; the sequence is KMENNVSDQSPADIKPSVEKEQLLNV. A compositionally biased stretch (basic and acidic residues) spans 319-329; it reads PSVEKEQLLNV.

In terms of assembly, forms heterodimers with BZIP18, BZIP43 and VIP1/BZIP51.

The protein resides in the nucleus. Functionally, transcriptional activator. This is Basic leucine zipper 61 from Arabidopsis thaliana (Mouse-ear cress).